We begin with the raw amino-acid sequence, 444 residues long: Methylenetetrahydrofolate--tRNA-(uracil-5-)-methyltransferase TrmFO (444 aa).

Residue 10 to 15 (GAGLAG) participates in FAD binding.

The protein belongs to the MnmG family. TrmFO subfamily. The cofactor is FAD.

It localises to the cytoplasm. The catalysed reaction is uridine(54) in tRNA + (6R)-5,10-methylene-5,6,7,8-tetrahydrofolate + NADH + H(+) = 5-methyluridine(54) in tRNA + (6S)-5,6,7,8-tetrahydrofolate + NAD(+). It carries out the reaction uridine(54) in tRNA + (6R)-5,10-methylene-5,6,7,8-tetrahydrofolate + NADPH + H(+) = 5-methyluridine(54) in tRNA + (6S)-5,6,7,8-tetrahydrofolate + NADP(+). Functionally, catalyzes the folate-dependent formation of 5-methyl-uridine at position 54 (M-5-U54) in all tRNAs. This Streptococcus agalactiae serotype III (strain NEM316) protein is Methylenetetrahydrofolate--tRNA-(uracil-5-)-methyltransferase TrmFO.